Here is a 101-residue protein sequence, read N- to C-terminus: Small ribosomal subunit protein uS14 (101 aa).

This sequence belongs to the universal ribosomal protein uS14 family. In terms of assembly, part of the 30S ribosomal subunit. Contacts proteins S3 and S10.

In terms of biological role, binds 16S rRNA, required for the assembly of 30S particles and may also be responsible for determining the conformation of the 16S rRNA at the A site. In Photobacterium profundum (strain SS9), this protein is Small ribosomal subunit protein uS14.